The following is a 199-amino-acid chain: Probable thymidylate kinase (199 aa).

ATP is bound at residue G7–T14.

It belongs to the thymidylate kinase family.

The enzyme catalyses dTMP + ATP = dTDP + ADP. In Halobacterium salinarum (strain ATCC 29341 / DSM 671 / R1), this protein is Probable thymidylate kinase.